Reading from the N-terminus, the 491-residue chain is Eupatolide synthase (491 aa).

A helical; Signal-anchor for type II membrane protein membrane pass occupies residues 7–27; sequence LPSWLLPAVVILTISCILMLW. C430 lines the heme pocket.

It belongs to the cytochrome P450 family. Requires heme as cofactor. In terms of tissue distribution, expressed in leaf primordia.

Its subcellular location is the membrane. The catalysed reaction is 8beta-hydroxygermacra-1(10),4,11(13)-trien-12-oate + reduced [NADPH--hemoprotein reductase] + O2 = eupatolide + oxidized [NADPH--hemoprotein reductase] + 2 H2O. Its pathway is secondary metabolite biosynthesis; terpenoid biosynthesis. In terms of biological role, involved in the biosynthesis of germacrene-derived sesquiterpene lactones. Hydroxylates 8-beta-hydroxy-germacrene A acid to 6-alpha,8-beta-hydroxy-germacrene A acid, which, in turn, undergo spontaneous lactonization to become eupatolide. This chain is Eupatolide synthase, found in Helianthus annuus (Common sunflower).